The primary structure comprises 486 residues: BTB/POZ domain and ankyrin repeat-containing protein BOP (486 aa).

Positions 25 to 115 (SDVTFSVEGR…LYSGQVSIVP (91 aa)) constitute a BTB domain. The segment at 121–135 (RPNCGERGCWHTHCS) adopts a C2HC NPR-type zinc-finger fold. Cys-124, Cys-129, His-131, and Cys-134 together coordinate Zn(2+). ANK repeat units follow at residues 257–286 (QKIR…LNLD), 287–316 (EALA…DVNY), 321–350 (AGKT…DPNV), and 354–388 (DNVT…KLRL). Disordered regions lie at residues 403 to 442 (EEGN…NHNI) and 464 to 486 (QMSD…HHDY). 2 stretches are compositionally biased toward low complexity: residues 406-418 (NANN…TTTT) and 432-442 (SSSSSGNNHNI). The span at 466–475 (SDDHGGRHGD) shows a compositional bias: basic and acidic residues.

Belongs to the plant 'ANKYRIN-BTB/POZ' family. 'NOOT-BOP-COCH-like' (NBCL) subfamily. In terms of assembly, homodimer. In terms of tissue distribution, expressed in xylem vessels and parenchyma cells of pedicel vascular tissue in the abscission zone (AZ). Accumulates in developing root nodules and present in roots, especially in the upper part.

It is found in the nucleus. It localises to the cytoplasm. The protein localises to the cell membrane. It participates in protein modification; protein ubiquitination. May act as a substrate-specific adapter of an E3 ubiquitin-protein ligase complex (CUL3-RBX1-BTB) which mediates the ubiquitination and subsequent proteasomal degradation of target proteins. Transcriptional co-regulator involved in promoting the fate and determination of leaf and flower meristems. Required for the abscission of senescent organs, probably by regulating the cell wall disorganization in abscission zones (AZs, e.g. pulvini at the base of leaves). Involved in the coordination of the symbiotic nodule developmental program; promotes the formation of root nodules by interacting directly with APP1 to modulate the expression of the nuclear transcription factor Y subunit (NF-YA1), a key nodulin. Necessary for the robust maintenance of nodule identity throughout the nodule developmental program. This is BTB/POZ domain and ankyrin repeat-containing protein BOP from Lupinus luteus (European yellow lupine).